A 217-amino-acid chain; its full sequence is MAAYRADDDYDFLYKVVLIGDSGVGKSNLLSRFTRNEFSLESKSTIGVEFATRSIHVDEKIVKAQIWDTAGQERYRAITSAYYRGAVGALLVYDVTRHVTFENVERWLKELRDHTEANIVIMLVGNKADLRHLRAVSTEDAKAFAERENTFFMETSALEALNVENAFTEVLSQIYRVASKKALDIGDDHTTLPKGQSINVGSKDDVSEVKKVGCCSS.

20-27 (GDSGVGKS) serves as a coordination point for GTP. Residues 42-50 (SKSTIGVEF) carry the Effector region motif. Residues 68 to 72 (DTAGQ), 126 to 129 (NKAD), and 156 to 157 (SA) contribute to the GTP site. S-geranylgeranyl cysteine attachment occurs at residues Cys214 and Cys215.

Belongs to the small GTPase superfamily. Rab family.

The protein localises to the cell membrane. In terms of biological role, intracellular vesicle trafficking and protein transport. In Arabidopsis thaliana (Mouse-ear cress), this protein is Ras-related protein RABA1g (RABA1G).